Reading from the N-terminus, the 79-residue chain is uncharacterized protein (79 aa).

This is an uncharacterized protein from Homo sapiens (Human).